The sequence spans 305 residues: Deoxyhypusine hydroxylase (305 aa).

HEAT-like PBS-type repeat units follow at residues 54-80 (LKHE…VLKD) and 87-113 (VRHE…YAED). Positions 56, 89, and 90 each coordinate Fe cation. The segment at 137 to 160 (EQTKDGTDENPYCSVDPAPPAQRK) is disordered. 3 HEAT-like PBS-type repeats span residues 178 to 204 (DRYR…GLQC), 209 to 235 (FRHE…ALEK), and 242 to 268 (VRHE…YRKD). Fe cation contacts are provided by His211, His244, and Glu245.

It belongs to the deoxyhypusine hydroxylase family. Fe(2+) serves as cofactor.

The catalysed reaction is [eIF5A protein]-deoxyhypusine + AH2 + O2 = [eIF5A protein]-hypusine + A + H2O. It functions in the pathway protein modification; eIF5A hypusination. Functionally, catalyzes the hydroxylation of the N(6)-(4-aminobutyl)-L-lysine intermediate produced by deoxyhypusine synthase/DHPS on a critical lysine of the eukaryotic translation initiation factor 5A/eIF-5A. This is the second step of the post-translational modification of that lysine into an unusual amino acid residue named hypusine. Hypusination is unique to mature eIF-5A factor and is essential for its function. The sequence is that of Deoxyhypusine hydroxylase (dohh) from Danio rerio (Zebrafish).